Consider the following 484-residue polypeptide: Ornithine decarboxylase (484 aa).

At K114 the chain carries N6-(pyridoxal phosphate)lysine. Pyridoxal 5'-phosphate contacts are provided by residues S245, G282, and E315–R318. F381–D382 serves as a coordination point for substrate. C422 functions as the Proton donor; shared with dimeric partner in the catalytic mechanism. Position 423 (D423) interacts with substrate. Residue Y452 participates in pyridoxal 5'-phosphate binding.

This sequence belongs to the Orn/Lys/Arg decarboxylase class-II family. As to quaternary structure, homodimer. Only the dimer is catalytically active, as the active sites are constructed of residues from both monomers. It depends on pyridoxal 5'-phosphate as a cofactor.

The protein localises to the cytoplasm. It carries out the reaction L-ornithine + H(+) = putrescine + CO2. It functions in the pathway amine and polyamine biosynthesis; putrescine biosynthesis via L-ornithine pathway; putrescine from L-ornithine: step 1/1. Its activity is regulated as follows. Inhibited by antizyme (AZ) OAZ1 in response to polyamine levels. AZ inhibits the assembly of the functional homodimer by binding to ODC monomers and targeting them for ubiquitin-independent proteolytic destruction by the 26S proteasome. In terms of biological role, catalyzes the first and rate-limiting step of polyamine biosynthesis that converts ornithine into putrescine, which is the precursor for the polyamines, spermidine and spermine. Polyamines are essential for cell proliferation and are implicated in cellular processes, ranging from DNA replication to apoptosis. The sequence is that of Ornithine decarboxylase (spe-1) from Neurospora crassa (strain ATCC 24698 / 74-OR23-1A / CBS 708.71 / DSM 1257 / FGSC 987).